Reading from the N-terminus, the 197-residue chain is Recombination protein RecR (197 aa).

The C4-type zinc finger occupies 56–71 (CVRCFSLTDAETCNFC). The Toprim domain maps to 79 to 174 (RVLCVVETFA…RVTRIAQGLP (96 aa)).

Belongs to the RecR family.

Its function is as follows. May play a role in DNA repair. It seems to be involved in an RecBC-independent recombinational process of DNA repair. It may act with RecF and RecO. The sequence is that of Recombination protein RecR from Myxococcus xanthus (strain DK1622).